Here is a 109-residue protein sequence, read N- to C-terminus: MFAQSFIITALAALAVASPLQVRTSDKCNTGTVHCCNSMKKSDSADISKIASLLQLDVKGVVGDVGLQCSPLVSLVGGGSKCSGQTVCCDQTKFNGLVNIGCSPINVGL.

Positions 1 to 17 are cleaved as a signal peptide; sequence MFAQSFIITALAALAVA. Cystine bridges form between Cys28-Cys88, Cys35-Cys82, Cys36-Cys69, and Cys89-Cys102.

This sequence belongs to the fungal hydrophobin family. As to quaternary structure, self-assembles to form functional amyloid fibrils called rodlets. Self-assembly into fibrillar rodlets occurs spontaneously at hydrophobic:hydrophilic interfaces and the rodlets further associate laterally to form amphipathic monolayers.

The protein localises to the secreted. The protein resides in the cell wall. In terms of biological role, aerial growth, conidiation, and dispersal of filamentous fungi in the environment rely upon a capability of their secreting small amphipathic proteins called hydrophobins (HPBs) with low sequence identity. Class I can self-assemble into an outermost layer of rodlet bundles on aerial cell surfaces, conferring cellular hydrophobicity that supports fungal growth, development and dispersal; whereas Class II form highly ordered films at water-air interfaces through intermolecular interactions but contribute nothing to the rodlet structure. Hydph7 is a class I hydrophobin involved in fruiting body development. The polypeptide is Class I hydrophobin 7 (Pleurotus ostreatus (strain PC15) (Oyster mushroom)).